The following is a 391-amino-acid chain: ATP phosphoribosyltransferase regulatory subunit (391 aa).

This sequence belongs to the class-II aminoacyl-tRNA synthetase family. HisZ subfamily. In terms of assembly, heteromultimer composed of HisG and HisZ subunits.

Its subcellular location is the cytoplasm. It participates in amino-acid biosynthesis; L-histidine biosynthesis; L-histidine from 5-phospho-alpha-D-ribose 1-diphosphate: step 1/9. Functionally, required for the first step of histidine biosynthesis. May allow the feedback regulation of ATP phosphoribosyltransferase activity by histidine. This is ATP phosphoribosyltransferase regulatory subunit from Clostridium kluyveri (strain ATCC 8527 / DSM 555 / NBRC 12016 / NCIMB 10680 / K1).